A 256-amino-acid polypeptide reads, in one-letter code: Type III pantothenate kinase (256 aa).

Position 6–13 (6–13 (DIGNTHTV)) interacts with ATP. Substrate-binding positions include Y100 and 107-110 (GADR). Residue D109 is the Proton acceptor of the active site. D129 serves as a coordination point for K(+). T132 contributes to the ATP binding site. Residue T184 participates in substrate binding.

The protein belongs to the type III pantothenate kinase family. In terms of assembly, homodimer. The cofactor is NH4(+). It depends on K(+) as a cofactor.

The protein resides in the cytoplasm. It carries out the reaction (R)-pantothenate + ATP = (R)-4'-phosphopantothenate + ADP + H(+). It participates in cofactor biosynthesis; coenzyme A biosynthesis; CoA from (R)-pantothenate: step 1/5. Functionally, catalyzes the phosphorylation of pantothenate (Pan), the first step in CoA biosynthesis. This Acidothermus cellulolyticus (strain ATCC 43068 / DSM 8971 / 11B) protein is Type III pantothenate kinase.